A 68-amino-acid chain; its full sequence is Large ribosomal subunit protein bL35 (68 aa).

The span at 1–25 shows a compositional bias: basic residues; it reads MGTKIKTHKGTKKRFRLSAKGKAMH. Residues 1–43 form a disordered region; the sequence is MGTKIKTHKGTKKRFRLSAKGKAMHRQSGTSHLAKGLSKKRRR.

This sequence belongs to the bacterial ribosomal protein bL35 family.

The polypeptide is Large ribosomal subunit protein bL35 (Rhodopirellula baltica (strain DSM 10527 / NCIMB 13988 / SH1)).